Here is a 1018-residue protein sequence, read N- to C-terminus: Contactin-1 (1018 aa).

The first 20 residues, 1–20 (MKMWLLVSHLVIISITTCLA), serve as a signal peptide directing secretion. Ig-like C2-type domains lie at 41–131 (PIFE…ATLS), 137–223 (PFPP…KSVF), 241–326 (PADI…ARIY), 331–407 (PEWV…AELK), 413–500 (PTFE…GTLV), and 504–601 (PTRI…LVVR). Disulfide bonds link Cys-65/Cys-114 and Cys-158/Cys-211. N-linked (GlcNAc...) asparagine glycosylation is found at Asn-208 and Asn-258. Cys-263 and Cys-310 are oxidised to a cystine. N-linked (GlcNAc...) asparagine glycosylation is present at Asn-338. 2 disulfide bridges follow: Cys-352/Cys-391 and Cys-436/Cys-484. N-linked (GlcNAc...) asparagine glycosylation is found at Asn-457 and Asn-473. N-linked (GlcNAc...) (complex) asparagine glycosylation is present at Asn-494. A glycan (N-linked (GlcNAc...) asparagine) is linked at Asn-521. A disulfide bridge links Cys-526 with Cys-583. The N-linked (GlcNAc...) asparagine glycan is linked to Asn-591. Fibronectin type-III domains are found at residues 606–704 (PPGG…TDGA), 709–806 (APSD…SAQD), 811–906 (APTE…APPS), and 907–1000 (QPPR…TLSP). Positions 693 to 717 (SIPSNRIKTDGAAPNVAPSDVGGGG) are disordered. N-linked (GlcNAc...) asparagine glycosylation is present at Asn-933. The GPI-anchor amidated serine moiety is linked to residue Ser-993. Positions 994–1018 (GAPTLSPSLLGLLLPAFGILVYLEF) are cleaved as a propeptide — removed in mature form.

This sequence belongs to the immunoglobulin superfamily. Contactin family. Monomer. Interacts with CNTNAP1 in cis form. Binds to the carbonic-anhydrase like domain of PTPRZ1. Interacts with NOTCH1 and TNR. Detected in a complex with NRCAM and PTPRB. Interacts with TASOR. Strongly expressed in brain and in neuroblastoma and retinoblastoma cell lines. Lower levels of expression in lung, pancreas, kidney and skeletal muscle.

Its subcellular location is the cell membrane. In terms of biological role, contactins mediate cell surface interactions during nervous system development. Involved in the formation of paranodal axo-glial junctions in myelinated peripheral nerves and in the signaling between axons and myelinating glial cells via its association with CNTNAP1. Participates in oligodendrocytes generation by acting as a ligand of NOTCH1. Its association with NOTCH1 promotes NOTCH1 activation through the released notch intracellular domain (NICD) and subsequent translocation to the nucleus. Interaction with TNR induces a repulsion of neurons and an inhibition of neurite outgrowth. This Homo sapiens (Human) protein is Contactin-1 (CNTN1).